We begin with the raw amino-acid sequence, 103 residues long: Acylphosphatase-2 (103 aa).

S2 is modified (N-acetylserine). The Acylphosphatase-like domain occupies 13-103 (SVDYEVFGRV…LDFSGFSTRY (91 aa)). Residue C26 is modified to S-glutathionyl cysteine; alternate. Catalysis depends on residues R28 and N46.

This sequence belongs to the acylphosphatase family. As to quaternary structure, monomer (TU1) or homodimer (TU3) in absence of reducing factors; disulfide linked.

It catalyses the reaction an acyl phosphate + H2O = a carboxylate + phosphate + H(+). Its function is as follows. Its physiological role is not yet clear. This Meleagris gallopavo (Wild turkey) protein is Acylphosphatase-2 (ACYP2).